The primary structure comprises 321 residues: o-succinylbenzoate synthase (321 aa).

The Proton donor role is filled by Lys-110. Mg(2+)-binding residues include Asp-138, Glu-165, and Asp-188. Lys-212 acts as the Proton acceptor in catalysis.

Belongs to the mandelate racemase/muconate lactonizing enzyme family. MenC type 1 subfamily. A divalent metal cation is required as a cofactor.

It catalyses the reaction (1R,6R)-6-hydroxy-2-succinyl-cyclohexa-2,4-diene-1-carboxylate = 2-succinylbenzoate + H2O. Its pathway is quinol/quinone metabolism; 1,4-dihydroxy-2-naphthoate biosynthesis; 1,4-dihydroxy-2-naphthoate from chorismate: step 4/7. It participates in quinol/quinone metabolism; menaquinone biosynthesis. Functionally, converts 2-succinyl-6-hydroxy-2,4-cyclohexadiene-1-carboxylate (SHCHC) to 2-succinylbenzoate (OSB). The polypeptide is o-succinylbenzoate synthase (Mycolicibacterium smegmatis (strain ATCC 700084 / mc(2)155) (Mycobacterium smegmatis)).